The primary structure comprises 338 residues: Ribosomal RNA small subunit methyltransferase H (338 aa).

Residues 53 to 55 (GGH), D72, Y99, D123, and Q130 contribute to the S-adenosyl-L-methionine site. The disordered stretch occupies residues 277–298 (ITPRSKSKSPEGLPVELPGMGP).

Belongs to the methyltransferase superfamily. RsmH family.

The protein resides in the cytoplasm. It catalyses the reaction cytidine(1402) in 16S rRNA + S-adenosyl-L-methionine = N(4)-methylcytidine(1402) in 16S rRNA + S-adenosyl-L-homocysteine + H(+). In terms of biological role, specifically methylates the N4 position of cytidine in position 1402 (C1402) of 16S rRNA. In Rhodococcus opacus (strain B4), this protein is Ribosomal RNA small subunit methyltransferase H.